A 1003-amino-acid chain; its full sequence is PHD finger protein 12 (1003 aa).

The tract at residues 29–59 (APPKTDEAEKRSRKPEKESRRSGRATNHDSC) is disordered. Positions 32 to 59 (KTDEAEKRSRKPEKESRRSGRATNHDSC) are enriched in basic and acidic residues. The PHD-type 1 zinc finger occupies 56–105 (HDSCDSCKEGGDLLCCDHCPAAFHLQCCNPPLSEEMLPPGEWMCHRCTVR). Residues C59, S61, C62, H79, and C82 each contribute to the Zn(2+) site. Disordered regions lie at residues 110–183 (EQKK…HNDV) and 234–255 (TTALPGSSKRRRKEETTGKNVK). Residues S131 and S134 each carry the phosphoserine modification. Residues 138 to 161 (LLDRPASKTELKAIAHARILERRA) show a composition bias toward basic and acidic residues. Residues 165 to 178 (GTPTSNASTETPTS) are compositionally biased toward polar residues. The SIN3 interacting domain 1 stretch occupies residues 202–241 (VQPQLRRPFELLIAAAMERNPTQFQLPNELTCTTALPGSS). The PHD-type 2; atypical zinc-finger motif lies at 271–321 (VKVCFTCNRSCRVAPLIQCDYCPLLFHMDCLEPPLTAMPLGRWMCPNHIEH). Zn(2+)-binding residues include C274, C277, C289, C292, H297, C300, C315, and H318. The segment at 328 to 364 (NLTLSNRCQVFDRFQDTISQHVVKVDFLNRIHKKHPP) is SIN3 interacting domain 2. A Glycyl lysine isopeptide (Lys-Gly) (interchain with G-Cter in SUMO2) cross-link involves residue K467. Disordered regions lie at residues 531–583 (KAPC…GWPR) and 641–671 (HRKTVQSQIGPSSTESRPLGSPPNATRVLTP). S555 carries the phosphoserine modification. Phosphothreonine is present on residues T557 and T570. Residues 641–656 (HRKTVQSQIGPSSTES) show a composition bias toward polar residues. The residue at position 670 (T670) is a Phosphothreonine. Residues 814–868 (LYIGTGADMDVCLTNYGHCNYVSGKHACIFYDENTKHYELLNYSEHGTTVDNVLY) form the FHA domain. A disordered region spans residues 894-922 (RRRHQKQDEEPSEEAAMMSSQAQGPQRRP). A Glycyl lysine isopeptide (Lys-Gly) (interchain with G-Cter in SUMO2) cross-link involves residue K899. A compositionally biased stretch (low complexity) spans 907–916 (EAAMMSSQAQ). Glycyl lysine isopeptide (Lys-Gly) (interchain with G-Cter in SUMO2) cross-links involve residues K972, K986, and K990.

Component of SIN3 complexes. Interacts with SIN3A in a complex composed of HDAC1, SAP30 and SIN3A. Component of the SIN3B complex, which includes SIN3B, HDAC2 or HDAC1, PHF12 and MORF4L1; interacts directly with all subunits. Interacts with TLE5. In terms of tissue distribution, expressed mainly in heart, brain, lung, liver and testis.

It localises to the nucleus. Functionally, transcriptional repressor acting as key scaffolding subunit of SIN3 complexes which contributes to complex assembly by contacting each core subunit domain, stabilizes the complex and constitutes the substrate receptor by recruiting the H3 histone tail. SIN3 complexes are composed of a SIN3 scaffold subunit, one catalytic core (HDAC1 or HDAC2) and 2 chromatin targeting modules. SIN3B complex represses transcription and counteracts the histone acetyltransferase activity of EP300 through the recognition H3K27ac marks by PHF12 and the activity of the histone deacetylase HDAC2. SIN3B complex is recruited downstream of the constitutively active genes transcriptional start sites through interaction with histones and mitigates histone acetylation and RNA polymerase II progression within transcribed regions contributing to the regulation of transcription. May also repress transcription in a SIN3A-independent manner through recruitment of functional TLE5 complexes to DNA. May also play a role in ribosomal biogenesis. In Mus musculus (Mouse), this protein is PHD finger protein 12.